The following is a 596-amino-acid chain: Mitoguardin 2 (596 aa).

A run of 2 helical transmembrane segments spans residues 11 to 31 (IMQA…STFG) and 40 to 60 (LSPS…ALAL). Disordered stretches follow at residues 67-158 (RRGR…AAWE) and 576-596 (ALPK…GQQD). Residues 110 to 123 (MSPSTRSNDTLSGV) are compositionally biased toward polar residues. Low complexity predominate over residues 124 to 140 (SSIAQSKHSSSSHSIAS). Composition is skewed to polar residues over residues 143 to 152 (VPSSPNQSVN) and 583 to 596 (QAES…GQQD).

It belongs to the mitoguardin family. As to quaternary structure, homodimer and heterodimer; forms heterodimers with miga1.

The protein localises to the mitochondrion outer membrane. Its function is as follows. Regulator of mitochondrial fusion: acts by forming homo- and heterodimers at the mitochondrial outer membrane and facilitating the formation of pld6/MitoPLD dimers. May act by regulating phospholipid metabolism via pld6/MitoPLD. This Danio rerio (Zebrafish) protein is Mitoguardin 2.